A 351-amino-acid polypeptide reads, in one-letter code: Fe(3+) ions import ATP-binding protein FbpC (351 aa).

Residues L9–M239 form the ABC transporter domain. An ATP-binding site is contributed by G41–T48.

Belongs to the ABC transporter superfamily. Fe(3+) ion importer (TC 3.A.1.10) family. The complex is composed of two ATP-binding proteins (FbpC), two transmembrane proteins (FbpB) and a solute-binding protein (FbpA).

The protein localises to the cell inner membrane. It catalyses the reaction Fe(3+)(out) + ATP + H2O = Fe(3+)(in) + ADP + phosphate + H(+). Part of the ABC transporter complex FbpABC involved in Fe(3+) ions import. Responsible for energy coupling to the transport system. In Mannheimia succiniciproducens (strain KCTC 0769BP / MBEL55E), this protein is Fe(3+) ions import ATP-binding protein FbpC.